The sequence spans 332 residues: Transaldolase (332 aa).

The active-site Schiff-base intermediate with substrate is the K136.

This sequence belongs to the transaldolase family. Type 1 subfamily.

The protein localises to the cytoplasm. It catalyses the reaction D-sedoheptulose 7-phosphate + D-glyceraldehyde 3-phosphate = D-erythrose 4-phosphate + beta-D-fructose 6-phosphate. It functions in the pathway carbohydrate degradation; pentose phosphate pathway; D-glyceraldehyde 3-phosphate and beta-D-fructose 6-phosphate from D-ribose 5-phosphate and D-xylulose 5-phosphate (non-oxidative stage): step 2/3. Transaldolase is important for the balance of metabolites in the pentose-phosphate pathway. This Nostoc sp. (strain PCC 7120 / SAG 25.82 / UTEX 2576) protein is Transaldolase.